The sequence spans 87 residues: NADH-ubiquinone oxidoreductase chain 4L (87 aa).

Transmembrane regions (helical) follow at residues Phe22 to Gly42 and Leu49 to Val69.

The protein belongs to the complex I subunit 4L family.

The protein resides in the mitochondrion membrane. The catalysed reaction is a ubiquinone + NADH + 5 H(+)(in) = a ubiquinol + NAD(+) + 4 H(+)(out). Functionally, core subunit of the mitochondrial membrane respiratory chain NADH dehydrogenase (Complex I) that is believed to belong to the minimal assembly required for catalysis. Complex I functions in the transfer of electrons from NADH to the respiratory chain. The immediate electron acceptor for the enzyme is believed to be ubiquinone. In Apis mellifera ligustica (Common honeybee), this protein is NADH-ubiquinone oxidoreductase chain 4L (ND4L).